The chain runs to 1527 residues: ATP-binding cassette sub-family C member 3 (1527 aa).

At 1–32 the chain is on the extracellular side; it reads MDALCGSGELGSKFWDSNLSVHTENPDLTPCF. Asparagine 18 carries an N-linked (GlcNAc...) asparagine glycan. The chain crosses the membrane as a helical span at residues 33 to 53; that stretch reads QNSLLAWVPCIYLWVALPCYL. Topologically, residues 54–73 are cytoplasmic; the sequence is LYLRHHCRGYIILSHLSKLK. A helical transmembrane segment spans residues 74–94; it reads MVLGVLLWCVSWADLFYSFHG. Topologically, residues 95–99 are extracellular; that stretch reads LVHGR. A helical membrane pass occupies residues 100 to 120; the sequence is APAPVFFVTPLVVGVTMLLAT. The Cytoplasmic segment spans residues 121-132; the sequence is LLIQYERLQGVQ. A helical transmembrane segment spans residues 133-153; it reads SSGVLIIFWFLCVVCAIVPFR. At 154–171 the chain is on the extracellular side; it reads SKILLAKAEGEISDPFRF. Residues 172–192 form a helical membrane-spanning segment; sequence TTFYIHFALVLSALILACFRE. The Cytoplasmic portion of the chain corresponds to 193 to 302; it reads KPPFFSAKNV…RPRKPSFLKA (110 aa). The chain crosses the membrane as a helical span at residues 303-323; the sequence is LLATFGSSFLISACFKLIQDL. In terms of domain architecture, ABC transmembrane type-1 1 spans 311–594; the sequence is FLISACFKLI…LPQLISNLTQ (284 aa). The Extracellular segment spans residues 324 to 349; sequence LSFINPQLLSILIRFISNPMAPSWWG. The helical transmembrane segment at 350–370 threads the bilayer; it reads FLVAGLMFLCSMMQSLILQHY. Over 371-426 the chain is Cytoplasmic; it reads YHYIFVTGVKFRTGIMGVIYRKALVITNSVKRASTVGEIVNLMSVDAQRFMDLAPF. Residues 427-447 form a helical membrane-spanning segment; it reads LNLLWSAPLQIILAIYFLWQN. The Extracellular segment spans residues 448-450; sequence LGP. The helical transmembrane segment at 451–471 threads the bilayer; that stretch reads SVLAGVAFMVLLIPLNGAVAV. The Cytoplasmic segment spans residues 472–533; that stretch reads KMRAFQVKQM…LLRTAAYLHT (62 aa). The helical transmembrane segment at 534 to 554 threads the bilayer; the sequence is TTTFTWMCSPFLVTLITLWVY. Over 555-576 the chain is Extracellular; it reads VYVDPNNVLDAEKAFVSVSLFN. A helical transmembrane segment spans residues 577-597; sequence ILRLPLNMLPQLISNLTQASV. Residues 598–963 lie on the Cytoplasmic side of the membrane; the sequence is SLKRIQQFLS…VELSVFWDYA (366 aa). Residues 629–851 form the ABC transporter 1 domain; sequence IHSGTFTWAQ…NGSFANFLCN (223 aa). 661–668 serves as a coordination point for ATP; the sequence is GPVGCGKS. Serine 908 and serine 911 each carry phosphoserine. A disordered region spans residues 910 to 932; that stretch reads LSSDGEGQGRPVPRRHLGPSEKV. Residues 964–984 form a helical membrane-spanning segment; sequence KAVGLCTTLAICLLYVGQSAA. The ABC transmembrane type-1 2 domain occupies 971–1252; it reads TLAICLLYVG…MIRMMSDLES (282 aa). Over 985-1021 the chain is Extracellular; that stretch reads AIGANVWLSAWTNDAMADSRQNNTSLRLGVYAALGIL. Asparagine 1006 and asparagine 1007 each carry an N-linked (GlcNAc...) asparagine glycan. The chain crosses the membrane as a helical span at residues 1022-1042; that stretch reads QGFLVMLAAMAMAAGGIQAAR. Residues 1043–1085 lie on the Cytoplasmic side of the membrane; it reads VLHQALLHNKIRSPQSFFDTTPSGRILNCFSKDIYVVDEVLAP. A helical membrane pass occupies residues 1086–1106; the sequence is VILMLLNSFFNAISTLVVIMA. Position 1107 (serine 1107) is a topological domain, extracellular. The helical transmembrane segment at 1108–1128 threads the bilayer; that stretch reads TPLFTVVILPLAVLYTLVQRF. At 1129-1199 the chain is on the cytoplasmic side; the sequence is YAATSRQLKR…ISNRWLSIGV (71 aa). Residues 1200 to 1220 traverse the membrane as a helical segment; sequence EFVGNCVVLFAALFAVIGRSS. At 1221 to 1222 the chain is on the extracellular side; sequence LN. The helical transmembrane segment at 1223-1243 threads the bilayer; that stretch reads PGLVGLSVSYSLQVTFALNWM. The Cytoplasmic portion of the chain corresponds to 1244-1527; that stretch reads IRMMSDLESN…YGMARDAGLA (284 aa). One can recognise an ABC transporter 2 domain in the interval 1291–1523; it reads FRNYSVRYRP…RGIFYGMARD (233 aa). 1323–1330 provides a ligand contact to ATP; sequence GRTGAGKS.

The protein belongs to the ABC transporter superfamily. ABCC family. Conjugate transporter (TC 3.A.1.208) subfamily. In terms of tissue distribution, mainly expressed in the liver. Also expressed in small intestine, colon, prostate, testis, brain and at a lower level in the kidney. In testis, localized to peritubular myoid cells, Leydig cells, along the basal membrane of Sertoli cells and moderately in the adluminal compartment of the seminiferous tubules.

It is found in the basolateral cell membrane. The protein localises to the basal cell membrane. It catalyses the reaction taurocholate(in) + ATP + H2O = taurocholate(out) + ADP + phosphate + H(+). The catalysed reaction is glycocholate(in) + ATP + H2O = glycocholate(out) + ADP + phosphate + H(+). It carries out the reaction taurolithocholate 3-sulfate(in) + ATP + H2O = taurolithocholate 3-sulfate(out) + ADP + phosphate + H(+). The enzyme catalyses taurochenodeoxycholate 3-sulfate(in) + ATP + H2O = taurochenodeoxycholate 3-sulfate(out) + ADP + phosphate + H(+). It catalyses the reaction an S-substituted glutathione(in) + ATP + H2O = an S-substituted glutathione(out) + ADP + phosphate + H(+). The catalysed reaction is ATP + H2O + xenobioticSide 1 = ADP + phosphate + xenobioticSide 2.. It carries out the reaction 17beta-estradiol 17-O-(beta-D-glucuronate)(in) + ATP + H2O = 17beta-estradiol 17-O-(beta-D-glucuronate)(out) + ADP + phosphate + H(+). The enzyme catalyses dehydroepiandrosterone 3-sulfate(in) + ATP + H2O = dehydroepiandrosterone 3-sulfate(out) + ADP + phosphate + H(+). It catalyses the reaction leukotriene C4(in) + ATP + H2O = leukotriene C4(out) + ADP + phosphate + H(+). The catalysed reaction is (4Z,15Z)-bilirubin IXalpha C8-beta-D-glucuronoside(in) + ATP + H2O = (4Z,15Z)-bilirubin IXalpha C8-beta-D-glucuronoside(out) + ADP + phosphate + H(+). It carries out the reaction (4Z,15Z)-bilirubin IXalpha C8,C12-beta-D-bisglucuronoside(in) + ATP + H2O = (4Z,15Z)-bilirubin IXalpha C8,C12-beta-D-bisglucuronoside(out) + ADP + phosphate + H(+). Functionally, ATP-dependent transporter of the ATP-binding cassette (ABC) family that binds and hydrolyzes ATP to enable active transport of various substrates including many drugs, toxicants and endogenous compound across cell membranes. Transports glucuronide conjugates such as bilirubin diglucuronide, estradiol-17-beta-o-glucuronide and GSH conjugates such as leukotriene C4 (LTC4). Transports also various bile salts (taurocholate, glycocholate, taurochenodeoxycholate-3-sulfate, taurolithocholate- 3-sulfate). Does not contribute substantially to bile salt physiology but provides an alternative route for the export of bile acids and glucuronides from cholestatic hepatocytes. May contribute to regulate the transport of organic compounds in testes across the blood-testis-barrier. Can confer resistance to various anticancer drugs, methotrexate, tenoposide and etoposide, by decreasing accumulation of these drugs in cells. The protein is ATP-binding cassette sub-family C member 3 of Homo sapiens (Human).